Reading from the N-terminus, the 459-residue chain is Exodeoxyribonuclease 7 large subunit (459 aa).

Belongs to the XseA family. As to quaternary structure, heterooligomer composed of large and small subunits.

It localises to the cytoplasm. It catalyses the reaction Exonucleolytic cleavage in either 5'- to 3'- or 3'- to 5'-direction to yield nucleoside 5'-phosphates.. Bidirectionally degrades single-stranded DNA into large acid-insoluble oligonucleotides, which are then degraded further into small acid-soluble oligonucleotides. The sequence is that of Exodeoxyribonuclease 7 large subunit from Pseudomonas aeruginosa (strain LESB58).